Consider the following 96-residue polypeptide: Aspartyl/glutamyl-tRNA(Asn/Gln) amidotransferase subunit C (96 aa).

The protein belongs to the GatC family. As to quaternary structure, heterotrimer of A, B and C subunits.

The enzyme catalyses L-glutamyl-tRNA(Gln) + L-glutamine + ATP + H2O = L-glutaminyl-tRNA(Gln) + L-glutamate + ADP + phosphate + H(+). The catalysed reaction is L-aspartyl-tRNA(Asn) + L-glutamine + ATP + H2O = L-asparaginyl-tRNA(Asn) + L-glutamate + ADP + phosphate + 2 H(+). Functionally, allows the formation of correctly charged Asn-tRNA(Asn) or Gln-tRNA(Gln) through the transamidation of misacylated Asp-tRNA(Asn) or Glu-tRNA(Gln) in organisms which lack either or both of asparaginyl-tRNA or glutaminyl-tRNA synthetases. The reaction takes place in the presence of glutamine and ATP through an activated phospho-Asp-tRNA(Asn) or phospho-Glu-tRNA(Gln). This Exiguobacterium sibiricum (strain DSM 17290 / CCUG 55495 / CIP 109462 / JCM 13490 / 255-15) protein is Aspartyl/glutamyl-tRNA(Asn/Gln) amidotransferase subunit C.